A 121-amino-acid polypeptide reads, in one-letter code: uncharacterized protein (121 aa).

Residues 43-86 (LKECSSHVAAFADCSKDKYISVVWECRELQQLMKNCLVEYTTSE) enclose the CHCH domain. 2 short sequence motifs (cx9C motif) span residues 46-56 (CSSHVAAFADC) and 68-78 (CRELQQLMKNC). Intrachain disulfides connect cysteine 46–cysteine 78 and cysteine 56–cysteine 68.

It belongs to the CMC family.

This is an uncharacterized protein from Dictyostelium discoideum (Social amoeba).